The primary structure comprises 196 residues: Mpv17-like protein (196 aa).

The Cytoplasmic segment spans residues 1-16 (MAGWWPALSRAARRHP). Residues 16-55 (PWPTNVLLYGSLVSAGDALQQRLQGREANWRQTRRVATLV) form a targeting to peroxisomes region. A helical membrane pass occupies residues 17 to 34 (WPTNVLLYGSLVSAGDAL). Residues 35 to 50 (QQRLQGREANWRQTRR) lie on the Lumenal side of the membrane. Residues 51 to 67 (VATLVVTFHANFNYVWL) form a helical membrane-spanning segment. At 68-90 (RLLERALPGRAPHALLAKLLCDQ) the chain is on the cytoplasmic side. Residues 91–108 (VVGAPIAVSAFYVGMSIL) form a helical membrane-spanning segment. Residues 109 to 150 (QGKDDIFLDLKQKFWNTYLSGLMYWPFVQLTNFSLVPVQWRT) are Lumenal-facing. A helical membrane pass occupies residues 151–167 (AYAGVCGFLWATFICFS). Residues 168–196 (QQSGDGTFKSAFTILYTKGTSATEGYPKK) are Cytoplasmic-facing.

Belongs to the peroxisomal membrane protein PXMP2/4 family. As to expression, isoform 1 is detected in the kidney (at protein level). Isoform 1 and isoform 2 are expressed in the kidney, heart, liver, lung, pancreas and skeletal muscle.

The protein resides in the peroxisome membrane. In terms of biological role, participates in reactive oxygen species metabolism by up- or down-regulation of the genes of antioxidant enzymes. Protective against the mitochondrial apoptotic cascade. This Homo sapiens (Human) protein is Mpv17-like protein (MPV17L).